A 534-amino-acid polypeptide reads, in one-letter code: Peptide chain release factor 3 (534 aa).

The 270-residue stretch at 9 to 278 folds into the tr-type G domain; sequence ARRRTFAIIS…FFIEHAPPPQ (270 aa). Residues 18 to 25, 86 to 90, and 140 to 143 each bind GTP; these read SHPDAGKT, DTPGH, and NKLD.

Belongs to the TRAFAC class translation factor GTPase superfamily. Classic translation factor GTPase family. PrfC subfamily.

The protein localises to the cytoplasm. Its function is as follows. Increases the formation of ribosomal termination complexes and stimulates activities of RF-1 and RF-2. It binds guanine nucleotides and has strong preference for UGA stop codons. It may interact directly with the ribosome. The stimulation of RF-1 and RF-2 is significantly reduced by GTP and GDP, but not by GMP. The chain is Peptide chain release factor 3 from Xanthomonas oryzae pv. oryzae (strain MAFF 311018).